The sequence spans 272 residues: Digeranylgeranylglyceryl phosphate synthase (272 aa).

The next 8 membrane-spanning stretches (helical) occupy residues 16 to 36 (AFIA…EIIL), 79 to 99 (ALYY…IISL), 100 to 120 (ENGI…YDLK), 124 to 144 (FIGN…GGLI), 148 to 168 (VNLG…REII), 194 to 214 (AVML…LLYY), 217 to 237 (IFSI…VYSA), and 252 to 272 (ISKY…MGAL).

This sequence belongs to the UbiA prenyltransferase family. DGGGP synthase subfamily. Requires Mg(2+) as cofactor.

Its subcellular location is the cell membrane. The catalysed reaction is sn-3-O-(geranylgeranyl)glycerol 1-phosphate + (2E,6E,10E)-geranylgeranyl diphosphate = 2,3-bis-O-(geranylgeranyl)-sn-glycerol 1-phosphate + diphosphate. It participates in membrane lipid metabolism; glycerophospholipid metabolism. Prenyltransferase that catalyzes the transfer of the geranylgeranyl moiety of geranylgeranyl diphosphate (GGPP) to the C2 hydroxyl of (S)-3-O-geranylgeranylglyceryl phosphate (GGGP). This reaction is the second ether-bond-formation step in the biosynthesis of archaeal membrane lipids. This chain is Digeranylgeranylglyceryl phosphate synthase, found in Methanosphaera stadtmanae (strain ATCC 43021 / DSM 3091 / JCM 11832 / MCB-3).